The sequence spans 399 residues: Polypyrimidine tract-binding protein homolog 1 (399 aa).

The residue at position 2 (Ser-2) is an N-acetylserine. RRM domains are found at residues 17 to 95 (KVVH…YSNR), 109 to 196 (GNVL…YSAH), and 242 to 322 (SNVL…YSRH). The interval 352–399 (AVSGSAPPAGWQNPQAQSQYSGYGGSPYMYPSSDPNGASPSGQPPYYG) is disordered. A compositionally biased stretch (low complexity) spans 365 to 384 (PQAQSQYSGYGGSPYMYPSS).

The protein localises to the nucleus. Its function is as follows. Plays a role in pre-mRNA splicing. Binds to the polypyrimidine tract of introns. May promote the binding of U2 snRNP to pre-mRNA. The sequence is that of Polypyrimidine tract-binding protein homolog 1 (PTB) from Arabidopsis thaliana (Mouse-ear cress).